The primary structure comprises 179 residues: Large ribosomal subunit protein uL6 (179 aa).

This sequence belongs to the universal ribosomal protein uL6 family. In terms of assembly, part of the 50S ribosomal subunit.

Functionally, this protein binds to the 23S rRNA, and is important in its secondary structure. It is located near the subunit interface in the base of the L7/L12 stalk, and near the tRNA binding site of the peptidyltransferase center. This Gemmatimonas aurantiaca (strain DSM 14586 / JCM 11422 / NBRC 100505 / T-27) protein is Large ribosomal subunit protein uL6.